A 323-amino-acid polypeptide reads, in one-letter code: Mycothiol acetyltransferase (323 aa).

N-acetyltransferase domains are found at residues 21–176 and 173–323; these read ELLR…VSLR and VSLR…LTKN. Position 44 (E44) interacts with 1D-myo-inositol 2-(L-cysteinylamino)-2-deoxy-alpha-D-glucopyranoside. 98–100 serves as a coordination point for acetyl-CoA; sequence LAV. Positions 200, 240, and 253 each coordinate 1D-myo-inositol 2-(L-cysteinylamino)-2-deoxy-alpha-D-glucopyranoside. Acetyl-CoA contacts are provided by residues 257 to 259 and 264 to 270; these read VGV and QGLGLGK. Residue Y291 participates in 1D-myo-inositol 2-(L-cysteinylamino)-2-deoxy-alpha-D-glucopyranoside binding.

It belongs to the acetyltransferase family. MshD subfamily. Monomer.

The enzyme catalyses 1D-myo-inositol 2-(L-cysteinylamino)-2-deoxy-alpha-D-glucopyranoside + acetyl-CoA = mycothiol + CoA + H(+). Catalyzes the transfer of acetyl from acetyl-CoA to desacetylmycothiol (Cys-GlcN-Ins) to form mycothiol. The sequence is that of Mycothiol acetyltransferase from Paenarthrobacter aurescens (strain TC1).